Consider the following 662-residue polypeptide: UvrABC system protein B (662 aa).

Residues 31-188 (DNIEGGEKAQ…NDLVDIQFER (158 aa)) enclose the Helicase ATP-binding domain. Residue 44–51 (GATGTGKT) coordinates ATP. The short motif at 97 to 120 (YYDYYQPEAYVPSSDTYIEKDSSV) is the Beta-hairpin element. In terms of domain architecture, Helicase C-terminal spans 435-601 (QIDDLLGEIN…TIKKEIRDLI (167 aa)). Residues 626–661 (KELVKKLEKQMQEAVEVLDFELAAQIRDMMLEVKAL) enclose the UVR domain.

It belongs to the UvrB family. In terms of assembly, forms a heterotetramer with UvrA during the search for lesions. Interacts with UvrC in an incision complex.

It is found in the cytoplasm. Its function is as follows. The UvrABC repair system catalyzes the recognition and processing of DNA lesions. A damage recognition complex composed of 2 UvrA and 2 UvrB subunits scans DNA for abnormalities. Upon binding of the UvrA(2)B(2) complex to a putative damaged site, the DNA wraps around one UvrB monomer. DNA wrap is dependent on ATP binding by UvrB and probably causes local melting of the DNA helix, facilitating insertion of UvrB beta-hairpin between the DNA strands. Then UvrB probes one DNA strand for the presence of a lesion. If a lesion is found the UvrA subunits dissociate and the UvrB-DNA preincision complex is formed. This complex is subsequently bound by UvrC and the second UvrB is released. If no lesion is found, the DNA wraps around the other UvrB subunit that will check the other stand for damage. The protein is UvrABC system protein B of Streptococcus pneumoniae (strain Taiwan19F-14).